Reading from the N-terminus, the 384-residue chain is Anhydro-N-acetylmuramic acid kinase (384 aa).

9–16 (GTSADGVD) is an ATP binding site.

Belongs to the anhydro-N-acetylmuramic acid kinase family.

It catalyses the reaction 1,6-anhydro-N-acetyl-beta-muramate + ATP + H2O = N-acetyl-D-muramate 6-phosphate + ADP + H(+). Its pathway is amino-sugar metabolism; 1,6-anhydro-N-acetylmuramate degradation. It participates in cell wall biogenesis; peptidoglycan recycling. Functionally, catalyzes the specific phosphorylation of 1,6-anhydro-N-acetylmuramic acid (anhMurNAc) with the simultaneous cleavage of the 1,6-anhydro ring, generating MurNAc-6-P. Is required for the utilization of anhMurNAc either imported from the medium or derived from its own cell wall murein, and thus plays a role in cell wall recycling. The protein is Anhydro-N-acetylmuramic acid kinase of Synechococcus sp. (strain CC9311).